The following is a 326-amino-acid chain: D-threonate 4-phosphate dehydrogenase (326 aa).

Substrate is bound by residues histidine 138 and threonine 139. A divalent metal cation contacts are provided by histidine 168, histidine 212, and histidine 267. Positions 275, 284, and 293 each coordinate substrate.

The protein belongs to the PdxA family. PdxA2 subfamily. As to quaternary structure, homodimer. Requires a divalent metal cation as cofactor.

It catalyses the reaction 4-O-phospho-D-threonate + NAD(+) = dihydroxyacetone phosphate + CO2 + NADH. In terms of biological role, catalyzes the NAD-dependent oxidation and subsequent decarboxylation of D-threonate 4-phosphate to produce dihydroxyacetone phosphate (DHAP). Can also use 4-hydroxy-L-threonine 4-phosphate as substrate. The sequence is that of D-threonate 4-phosphate dehydrogenase from Pectobacterium atrosepticum (strain SCRI 1043 / ATCC BAA-672) (Erwinia carotovora subsp. atroseptica).